We begin with the raw amino-acid sequence, 80 residues long: Peptide LaIT2 (80 aa).

The N-terminal stretch at 1–21 (MAKHLIVMFLVIMVISSLVDC) is a signal peptide. The region spanning 49–80 (QYGCPIISNMCEDHCRRKKMEGQCDLLDCVCS) is the BetaSPN-type CS-alpha/beta domain. 3 disulfide bridges follow: C52–C72, C59–C77, and C63–C79.

The protein belongs to the long chain scorpion toxin family. Class 2 subfamily. Expressed by the venom gland.

The protein resides in the secreted. Its function is as follows. Dual-function toxin that acts both as an insecticidal and an antimicrobial peptide. May inhibit voltage-gated potassium channels (Kv). This amphipathic peptide causes significant antimicrobial activity against E.coli (MIC=7 uM) but does not show any activity against S.aureus even at high concentration. In vivo, causes paralysis or death to crickets. This is Peptide LaIT2 from Liocheles australasiae (Dwarf wood scorpion).